We begin with the raw amino-acid sequence, 435 residues long: MRLTHVLSHTLGLLALGATAEAFSRSREAACSPKKPFRPLPTSSSRDKTCHVRSHGDGSDDSDYILSALHQCNHGGKVVFDEDKEYIIGTALNMTFLKNIDLEVLGTILFTNDTDYWQANSFKQGFQNATTFFQLGGEDVNMYGGGTINGNGQVWYDLYAEDDLILRPILMGIIGLNGGTIGPLKLRYSPQYYHFVANSSNVLFDGIDISGYSKSDNEAKNTDGWDTYRSNNIVIQNSVINNGDDCVSFKPNSTNILVQNLHCNGSHGISVGSLGQYKDEVDIVENVYVYNISMFNASDMARIKVWPGTPSALSADLQGGGGSGSVKNITYDTALIDNVDWAIEITQCYGQKNTTLCNEYPSSLTISDVHIKNFRGTTSGSEDPYVGTIVCSSPDTCSDIYTSNINVTSPDGTNDFVCDNVDESLLSVNCTATSD.

The first 22 residues, 1–22, serve as a signal peptide directing secretion; the sequence is MRLTHVLSHTLGLLALGATAEA. Residues 31–55 are disordered; that stretch reads CSPKKPFRPLPTSSSRDKTCHVRSH. Basic and acidic residues predominate over residues 45 to 55; that stretch reads SRDKTCHVRSH. 4 N-linked (GlcNAc...) asparagine glycosylation sites follow: Asn-93, Asn-112, Asn-128, and Asn-198. PbH1 repeat units lie at residues 199–229 and 230–251; these read SSNV…DTYR and SNNI…SFKP. The active-site Proton donor is Asp-244. An intrachain disulfide couples Cys-246 to Cys-263. N-linked (GlcNAc...) asparagine glycosylation is found at Asn-252 and Asn-264. Residues 253–273 form a PbH1 3 repeat; the sequence is STNILVQNLHCNGSHGISVGS. His-267 is a catalytic residue. N-linked (GlcNAc...) asparagine glycans are attached at residues Asn-291, Asn-296, Asn-328, and Asn-353. Residues 326-347 form a PbH1 4 repeat; that stretch reads VKNITYDTALIDNVDWAIEITQ. Residues 361–409 form a PbH1 5 repeat; the sequence is PSSLTISDVHIKNFRGTTSGSEDPYVGTIVCSSPDTCSDIYTSNINVTS. Cysteines 391 and 397 form a disulfide. Asn-406 and Asn-429 each carry an N-linked (GlcNAc...) asparagine glycan.

Belongs to the glycosyl hydrolase 28 family.

Its subcellular location is the secreted. The catalysed reaction is [(1-&gt;4)-alpha-D-galacturonosyl](n) + H2O = alpha-D-galacturonate + [(1-&gt;4)-alpha-D-galacturonosyl](n-1). Its function is as follows. Specific in hydrolyzing the terminal glycosidic bond of polygalacturonic acid and oligogalacturonates. In Aspergillus niger (strain ATCC MYA-4892 / CBS 513.88 / FGSC A1513), this protein is Probable exopolygalacturonase X (pgaX).